The chain runs to 332 residues: Anthranilate phosphoribosyltransferase (332 aa).

5-phospho-alpha-D-ribose 1-diphosphate contacts are provided by residues G79, 82-83, T87, 89-92, 107-115, and S119; these read GD, NIST, and KHGNRSVSS. Residue G79 participates in anthranilate binding. Mg(2+) is bound at residue S91. N110 lines the anthranilate pocket. An anthranilate-binding site is contributed by R165. D223 and E224 together coordinate Mg(2+).

The protein belongs to the anthranilate phosphoribosyltransferase family. In terms of assembly, homodimer. Requires Mg(2+) as cofactor.

The catalysed reaction is N-(5-phospho-beta-D-ribosyl)anthranilate + diphosphate = 5-phospho-alpha-D-ribose 1-diphosphate + anthranilate. The protein operates within amino-acid biosynthesis; L-tryptophan biosynthesis; L-tryptophan from chorismate: step 2/5. Functionally, catalyzes the transfer of the phosphoribosyl group of 5-phosphorylribose-1-pyrophosphate (PRPP) to anthranilate to yield N-(5'-phosphoribosyl)-anthranilate (PRA). This chain is Anthranilate phosphoribosyltransferase, found in Vibrio vulnificus (strain CMCP6).